Reading from the N-terminus, the 125-residue chain is Small ribosomal subunit protein eS8 (125 aa).

It belongs to the eukaryotic ribosomal protein eS8 family. Part of the 30S ribosomal subunit.

This is Small ribosomal subunit protein eS8 from Methanocorpusculum labreanum (strain ATCC 43576 / DSM 4855 / Z).